A 628-amino-acid chain; its full sequence is Chaperone protein HtpG (628 aa).

The a; substrate-binding stretch occupies residues 1–337 (MSEKKYTFET…SADLPLNVSR (337 aa)). Residues 338–554 (EILQHNKVID…DYGMSLHMQK (217 aa)) form a b region. The c stretch occupies residues 555-628 (MMEEAGQSFM…FVKLVNKYIR (74 aa)).

This sequence belongs to the heat shock protein 90 family. Homodimer.

The protein resides in the cytoplasm. Functionally, molecular chaperone. Has ATPase activity. This Francisella tularensis subsp. tularensis (strain WY96-3418) protein is Chaperone protein HtpG.